The sequence spans 457 residues: Phosphoglucosamine mutase (457 aa).

Serine 103 serves as the catalytic Phosphoserine intermediate. Residues serine 103, aspartate 244, aspartate 246, and aspartate 248 each contribute to the Mg(2+) site. Serine 103 carries the phosphoserine modification.

It belongs to the phosphohexose mutase family. Mg(2+) is required as a cofactor. Post-translationally, activated by phosphorylation.

The catalysed reaction is alpha-D-glucosamine 1-phosphate = D-glucosamine 6-phosphate. Its function is as follows. Catalyzes the conversion of glucosamine-6-phosphate to glucosamine-1-phosphate. The sequence is that of Phosphoglucosamine mutase from Granulibacter bethesdensis (strain ATCC BAA-1260 / CGDNIH1).